Consider the following 744-residue polypeptide: Glucosamine inositolphosphorylceramide transferase 1 (744 aa).

Helical transmembrane passes span 31–51, 378–398, and 460–480; these read FLVAAAAGAALVGGVYFWLVV, SLFGYMGFLVAVALVTFVGFV, and LFFCVIALIGIVNVCIAVHFL. Substrate is bound by residues N534, 558–563, 579–581, R609, and 665–669; these read NSLNNR, DDD, and FNCED. Mn(2+) is bound at residue D581. C667 and C718 form a disulfide bridge. D669 is a catalytic residue.

The protein belongs to the glycosyltransferase 64 family. Requires Mn(2+) as cofactor.

The protein localises to the membrane. The protein operates within sphingolipid metabolism. Functionally, essential protein. Glycosyltransferase that mediates the glycosylation of glycosylinositol phosphorylceramides (GIPCs), the major sphingolipids in the plasma membrane; acts as a HexN(Ac)-specific GIPC sugar transferase. Responsible for the glycosylation of a subgroup of GIPCs found in seeds and pollen that contain GlcNAc and GlcN (GlcN(Ac)). Maybe involved in the maintenance of cell-cell adhesion. The sequence is that of Glucosamine inositolphosphorylceramide transferase 1 from Oryza sativa subsp. indica (Rice).